The following is a 142-amino-acid chain: Large ribosomal subunit protein uL13 (142 aa).

It belongs to the universal ribosomal protein uL13 family. In terms of assembly, part of the 50S ribosomal subunit.

Functionally, this protein is one of the early assembly proteins of the 50S ribosomal subunit, although it is not seen to bind rRNA by itself. It is important during the early stages of 50S assembly. In Shigella boydii serotype 18 (strain CDC 3083-94 / BS512), this protein is Large ribosomal subunit protein uL13.